The primary structure comprises 233 residues: Leucyl/phenylalanyl-tRNA--protein transferase (233 aa).

The protein belongs to the L/F-transferase family.

It is found in the cytoplasm. The enzyme catalyses N-terminal L-lysyl-[protein] + L-leucyl-tRNA(Leu) = N-terminal L-leucyl-L-lysyl-[protein] + tRNA(Leu) + H(+). It catalyses the reaction N-terminal L-arginyl-[protein] + L-leucyl-tRNA(Leu) = N-terminal L-leucyl-L-arginyl-[protein] + tRNA(Leu) + H(+). It carries out the reaction L-phenylalanyl-tRNA(Phe) + an N-terminal L-alpha-aminoacyl-[protein] = an N-terminal L-phenylalanyl-L-alpha-aminoacyl-[protein] + tRNA(Phe). In terms of biological role, functions in the N-end rule pathway of protein degradation where it conjugates Leu, Phe and, less efficiently, Met from aminoacyl-tRNAs to the N-termini of proteins containing an N-terminal arginine or lysine. The polypeptide is Leucyl/phenylalanyl-tRNA--protein transferase (Desulfatibacillum aliphaticivorans).